Consider the following 149-residue polypeptide: Protein SprT-like (149 aa).

The SprT-like domain maps to 5–143; the sequence is DYVKQVSLED…CGLCRGKLLL (139 aa). His64 is a Zn(2+) binding site. The active site involves Glu65. His68 lines the Zn(2+) pocket.

The protein belongs to the SprT family. It depends on Zn(2+) as a cofactor.

It localises to the cytoplasm. This is Protein SprT-like from Streptococcus pneumoniae (strain Hungary19A-6).